Here is a 494-residue protein sequence, read N- to C-terminus: Subtilisin-like serine protease EN45_078720 (494 aa).

A signal peptide spans 1–16 (MKGFLSLTLLPLLVAA). The propeptide at 17 to 136 (SPVAVNSIHN…IEKDSEVRTM (120 aa)) is removed in mature form. The Inhibitor I9 domain maps to 43-136 (SYIVVFKKHV…IEKDSEVRTM (94 aa)). In terms of domain architecture, Peptidase S8 spans 146–448 (PWGLARISHR…GGSANYTKIL (303 aa)). IgE-binding stretches follow at residues 180–198 (VIDT…RANW) and 209–231 (EDGN…GVAK). Active-site charge relay system residues include aspartate 182 and histidine 214. N-linked (GlcNAc...) asparagine glycosylation is found at asparagine 244 and asparagine 280. Residue serine 376 is the Charge relay system of the active site. The N-linked (GlcNAc...) asparagine glycan is linked to asparagine 443. A propeptide spans 454 to 494 (KAHNAETTVEDRIGGIIDSAEKAFHKELGAIYSEIKDAVSA) (removed in mature form).

This sequence belongs to the peptidase S8 family.

Serine protease. This is Subtilisin-like serine protease EN45_078720 from Penicillium chrysogenum (Penicillium notatum).